Reading from the N-terminus, the 693-residue chain is Elongation factor G (693 aa).

The 275-residue stretch at Glu8 to Leu282 folds into the tr-type G domain. GTP-binding positions include Ala17–Thr24, Asp81–His85, and Asn135–Asp138.

This sequence belongs to the TRAFAC class translation factor GTPase superfamily. Classic translation factor GTPase family. EF-G/EF-2 subfamily.

Its subcellular location is the cytoplasm. Its function is as follows. Catalyzes the GTP-dependent ribosomal translocation step during translation elongation. During this step, the ribosome changes from the pre-translocational (PRE) to the post-translocational (POST) state as the newly formed A-site-bound peptidyl-tRNA and P-site-bound deacylated tRNA move to the P and E sites, respectively. Catalyzes the coordinated movement of the two tRNA molecules, the mRNA and conformational changes in the ribosome. The polypeptide is Elongation factor G (Streptococcus pneumoniae serotype 2 (strain D39 / NCTC 7466)).